Here is a 265-residue protein sequence, read N- to C-terminus: Polyglutamine-binding protein 1 (265 aa).

One can recognise a WW domain in the interval 46 to 80 (EGLPPSWYKVFDPSCGLPYYWNADTDLVSWLSPHD). Position 94 is a phosphoserine (serine 94). Residues 94 to 265 (SSNADAEEKL…AEASRTKQQD (172 aa)) are disordered. A compositionally biased stretch (basic and acidic residues) spans 99–175 (AEEKLDRSHD…DKADREEGKE (77 aa)). 15 repeat units span residues 104–110 (DRSHDKS), 111–117 (DRGHDKS), 118–124 (DRSHEKP), 125–131 (DRGHDKS), 132–138 (DRGHDKS), 139–140 (DR), 141–142 (DR), 143–144 (ER), 150–151 (DR), 152–153 (ER), 154–155 (ER), 156–157 (DR), 158–159 (ER), 160–161 (DR), and 162–163 (DR). Positions 104 to 138 (DRSHDKSDRGHDKSDRSHEKPDRGHDKSDRGHDKS) are 5 X 7 AA approximate tandem repeats of D-R-[SG]-H-D-K-S. Residues 139 to 144 (DRDRER) are 3 X 2 AA tandem repeats of [DE]-R. Positions 150–163 (DRERERDRERDRDR) are 7 X 2 AA tandem repeats of [DE]-R. An important for interaction with TXNL4A region spans residues 245-255 (YPSPGAVLRAN). Serine 247 carries the phosphoserine modification.

Interacts with POU3F2/Brn-2, ATXN1, TXNL4A, HTT and AR. Interaction with ATXN1 correlates positively with the length of the polyglutamine tract. Interacts with RNA polymerase II large subunit in a phosphorylation-dependent manner. Forms a ternary complex with ATXN1 mutant and phosphorylated RNA polymerase II. Interacts (via C-terminus) with TXNL4A and CD2BP2. Interacts (via WW domain) with ATN1 and SF3B1, and may interact with additional splice factors. Interacts (via WW domain) with WBP11; Leading to reduce interaction between PQBP1 and TXNL4A. Interacts with CAPRIN1. Interacts with DDX1. Interacts with SFPQ. Interacts with KHSRP.

The protein resides in the nucleus. Its subcellular location is the nucleus speckle. The protein localises to the cytoplasmic granule. Functionally, intrinsically disordered protein that acts as a scaffold, and which is involved in different processes, such as pre-mRNA splicing, transcription regulation, innate immunity and neuron development. Interacts with splicing-related factors via the intrinsically disordered region and regulates alternative splicing of target pre-mRNA species. May suppress the ability of POU3F2 to transactivate the DRD1 gene in a POU3F2 dependent manner. Can activate transcription directly or via association with the transcription machinery. May be involved in ATXN1 mutant-induced cell death. The interaction with ATXN1 mutant reduces levels of phosphorylated RNA polymerase II large subunit. Involved in the assembly of cytoplasmic stress granule, possibly by participating in the transport of neuronal RNA granules. Also acts as an innate immune sensor of infection by retroviruses, by detecting the presence of reverse-transcribed DNA in the cytosol. Directly binds retroviral reverse-transcribed DNA in the cytosol and interacts with CGAS, leading to activate the cGAS-STING signaling pathway, triggering type-I interferon production. This chain is Polyglutamine-binding protein 1 (PQBP1), found in Pongo pygmaeus (Bornean orangutan).